The following is a 146-amino-acid chain: Small ribosomal subunit protein bS6 (146 aa).

The disordered stretch occupies residues 100–146; the sequence is QSAMMRKRDDDDRGDRPDRGDRGRGPRPDRPPRRPRDDAAASDEGGF. The segment covering 105–138 has biased composition (basic and acidic residues); it reads RKRDDDDRGDRPDRGDRGRGPRPDRPPRRPRDDA.

Belongs to the bacterial ribosomal protein bS6 family.

Functionally, binds together with bS18 to 16S ribosomal RNA. This Methylocella silvestris (strain DSM 15510 / CIP 108128 / LMG 27833 / NCIMB 13906 / BL2) protein is Small ribosomal subunit protein bS6.